Reading from the N-terminus, the 129-residue chain is Large ribosomal subunit protein bL17 (129 aa).

This sequence belongs to the bacterial ribosomal protein bL17 family. As to quaternary structure, part of the 50S ribosomal subunit. Contacts protein L32.

This is Large ribosomal subunit protein bL17 from Buchnera aphidicola subsp. Baizongia pistaciae (strain Bp).